Reading from the N-terminus, the 1245-residue chain is Trafficking protein particle complex II-specific subunit 130 homolog (1245 aa).

Disordered stretches follow at residues 488–524 (GDGSGLDANSKPSPNKSASNYMARTMSGPATSETSLP) and 884–903 (HVGGTDASKTSSSSTDTRKV). 2 stretches are compositionally biased toward low complexity: residues 495 to 507 (ANSKPSPNKSASN) and 888 to 898 (TDASKTSSSST).

This sequence belongs to the TMEM1 family. In terms of assembly, part of the multisubunit TRAPP (transport protein particle) II complex composed of BET3, BET5, TRS20, TRS23, TRS31, TRS33, TRS65, TRS85, TRS120 and TRS130.

Its subcellular location is the golgi apparatus. The protein localises to the trans-Golgi network. The protein resides in the early endosome. In terms of biological role, specific subunit of the TRAPP II complex, a highly conserved vesicle tethering complex that is required for the proper transport of proteins in post-Golgi trafficking pathways to the growing cell plate in mitotic active cells. The chain is Trafficking protein particle complex II-specific subunit 130 homolog from Oryza sativa subsp. japonica (Rice).